A 1530-amino-acid polypeptide reads, in one-letter code: Brefeldin A resistance protein (1530 aa).

Positions 1–26 (MNQNSDTTHGQALGSTLNHTTEVTRI) are enriched in polar residues. Residues 1 to 100 (MNQNSDTTHG…SDDSSVDRLA (100 aa)) are disordered. Asn28 is a glycosylation site (N-linked (GlcNAc...) asparagine). Over residues 36-48 (SSSNVDESLDSSN) the composition is skewed to low complexity. The segment covering 54-64 (KASHTNEEYRS) has biased composition (basic and acidic residues). Asn67 is a glycosylation site (N-linked (GlcNAc...) asparagine). A compositionally biased stretch (low complexity) spans 72–93 (PSSSNEPSPESSSNSDSSSSDD). Residues 153–410 (KTFPDIFLQP…FLDMGFDCHP (258 aa)) form the ABC transporter 1 domain. Residues Asn273, Asn334, and Asn450 are each glycosylated (N-linked (GlcNAc...) asparagine). Phosphoserine is present on residues Ser486 and Ser489. The residue at position 491 (Thr491) is a Phosphothreonine. The next 6 membrane-spanning stretches (helical) occupy residues 539 to 559 (AYIG…GSIF), 575 to 595 (VLFF…ANMF), 620 to 640 (LIVD…VLYF), 649 to 669 (GGFW…SAFF), 684 to 704 (ALGG…IPNI), and 791 to 811 (LAII…ASET). A disordered region spans residues 843–864 (PLDLETGQDTQGGDVVKESPDN). Residues 882 to 1125 (FSWRNLNYDI…LLNYFESHGA (244 aa)) enclose the ABC transporter 2 domain. 918 to 925 (GESGAGKT) is a binding site for ATP. Asn1159 and Asn1175 each carry an N-linked (GlcNAc...) asparagine glycan. Residue Thr1186 is modified to Phosphothreonine. Transmembrane regions (helical) follow at residues 1220–1240 (ILMS…FTFY), 1255–1275 (AVFM…PKFI), 1300–1320 (AIIV…LCWF), 1338–1358 (YAWL…QAVA), 1367–1387 (ASVV…VLQP), and 1392–1412 (VGFW…EGLL). N-linked (GlcNAc...) asparagine glycans are attached at residues Asn1449 and Asn1460. The chain crosses the membrane as a helical span at residues 1492–1512 (GIFVGYVFFNIFAVLLLFYVF).

This sequence belongs to the ABC transporter superfamily. ABCG family. PDR (TC 3.A.1.205) subfamily.

The protein resides in the membrane. Confers hyper-resistance to brefeldin A (BFA), an inhibitor of intracellular protein transport. Could serve as an efflux pump of various antibiotics. The protein is Brefeldin A resistance protein (bfr1) of Schizosaccharomyces pombe (strain 972 / ATCC 24843) (Fission yeast).